The primary structure comprises 346 residues: uncharacterized protein (346 aa).

Positions 322–346 are disordered; sequence GRDGGYRETTSPPTGRGRNVRGSHA.

This is an uncharacterized protein from Mycobacterium tuberculosis (strain CDC 1551 / Oshkosh).